Consider the following 214-residue polypeptide: Hypoxanthine-guanine phosphoribosyltransferase (214 aa).

Alanine 2 carries the N-acetylalanine modification. Position 69 (lysine 69) interacts with GMP. The residue at position 103 (lysine 103) is an N6-acetyllysine. A Glycyl lysine isopeptide (Lys-Gly) (interchain with G-Cter in SUMO1); alternate cross-link involves residue lysine 115. Residue lysine 115 forms a Glycyl lysine isopeptide (Lys-Gly) (interchain with G-Cter in SUMO2); alternate linkage. GMP-binding positions include 134 to 142 (EDIIDTGKT), lysine 166, 186 to 188 (KFV), and aspartate 194. Aspartate 138 serves as the catalytic Proton acceptor. Phosphothreonine is present on threonine 142. A Mg(2+)-binding site is contributed by aspartate 194.

It belongs to the purine/pyrimidine phosphoribosyltransferase family. As to quaternary structure, homotetramer. Requires Mg(2+) as cofactor.

It localises to the cytoplasm. It carries out the reaction IMP + diphosphate = hypoxanthine + 5-phospho-alpha-D-ribose 1-diphosphate. It catalyses the reaction GMP + diphosphate = guanine + 5-phospho-alpha-D-ribose 1-diphosphate. It participates in purine metabolism; IMP biosynthesis via salvage pathway; IMP from hypoxanthine: step 1/1. In terms of biological role, converts guanine to guanosine monophosphate, and hypoxanthine to inosine monophosphate. Transfers the 5-phosphoribosyl group from 5-phosphoribosylpyrophosphate onto the purine. Plays a central role in the generation of purine nucleotides through the purine salvage pathway. The polypeptide is Hypoxanthine-guanine phosphoribosyltransferase (Hprt1) (Mus spretus (Western Mediterranean mouse)).